We begin with the raw amino-acid sequence, 443 residues long: Protoheme IX farnesyltransferase, mitochondrial (443 aa).

A run of 7 helical transmembrane segments spans residues 174–194 (AAGFALAPGPFDWPCFLLTSV), 235–255 (LAVSFATCCAVPGVAILTLGV), 257–277 (PLTGALGLFNIFLYTCCYTPL), 280–300 (ISIANTWVGAVVGAIPPVMGW), 309–329 (AGAFLLGGILYSWQFPHFNAL), 364–384 (LLVLSAAAPVLDITTWTFPIM), and 411–431 (LFFCSLWHLPLLLLLMLTCKR).

This sequence belongs to the UbiA prenyltransferase family.

It localises to the mitochondrion membrane. The catalysed reaction is heme b + (2E,6E)-farnesyl diphosphate + H2O = Fe(II)-heme o + diphosphate. In terms of biological role, converts protoheme IX and farnesyl diphosphate to heme O. This Homo sapiens (Human) protein is Protoheme IX farnesyltransferase, mitochondrial (COX10).